Here is a 360-residue protein sequence, read N- to C-terminus: MLVWLAEHLAKLYTGFNVFSYLTFRAIVSLLTALVISLWMGPHMIAWLQRLQIGQVVRNEGPESHFSKRGTPTMGGVMILVAIIVSVLMWANLSNPYVWCVLLVLAGYGAVGFVDDYRKVVRKDTKGLIARWKYFWQSVIALVVAFSMYAIGKDTPATQLVVPFFKDVMPQLGLLYVALAYFVIVGTSNAVNLTDGLDGLAIMPTVFVAAGFALVAWATGNMNFAGYLHIPYIRHASELVIVCTAIVGAGLGFLWFNTYPAQVFMGDVGSLALGGALGTIAVLLRQEFLLVIMGGVFVVETLSVILQVGSFKLRGQRIFRMAPIHHHYELKGWPEPRVIVRFWIISLMLVLIGLATLKVR.

10 helical membrane-spanning segments follow: residues 27–47 (IVSL…MIAW), 73–93 (TMGG…WANL), 94–114 (SNPY…VGFV), 132–152 (WKYF…YAIG), 168–188 (VMPQ…VGTS), 199–219 (GLAI…AWAT), 236–256 (ASEL…FLWF), 263–283 (VFMG…IAVL), 288–308 (FLLV…ILQV), and 338–358 (VIVR…ATLK).

The protein belongs to the glycosyltransferase 4 family. MraY subfamily. Requires Mg(2+) as cofactor.

It localises to the cell inner membrane. It carries out the reaction UDP-N-acetyl-alpha-D-muramoyl-L-alanyl-gamma-D-glutamyl-meso-2,6-diaminopimeloyl-D-alanyl-D-alanine + di-trans,octa-cis-undecaprenyl phosphate = di-trans,octa-cis-undecaprenyl diphospho-N-acetyl-alpha-D-muramoyl-L-alanyl-D-glutamyl-meso-2,6-diaminopimeloyl-D-alanyl-D-alanine + UMP. It participates in cell wall biogenesis; peptidoglycan biosynthesis. In terms of biological role, catalyzes the initial step of the lipid cycle reactions in the biosynthesis of the cell wall peptidoglycan: transfers peptidoglycan precursor phospho-MurNAc-pentapeptide from UDP-MurNAc-pentapeptide onto the lipid carrier undecaprenyl phosphate, yielding undecaprenyl-pyrophosphoryl-MurNAc-pentapeptide, known as lipid I. This chain is Phospho-N-acetylmuramoyl-pentapeptide-transferase, found in Pectobacterium carotovorum subsp. carotovorum (strain PC1).